The sequence spans 206 residues: dITP/XTP pyrophosphatase (206 aa).

7–12 (SNNAKK) provides a ligand contact to substrate. Catalysis depends on Asp-72, which acts as the Proton acceptor. Asp-72 serves as a coordination point for Mg(2+). Substrate is bound by residues Ser-73, 155-158 (FGYD), Lys-182, and 187-188 (HR).

This sequence belongs to the HAM1 NTPase family. In terms of assembly, homodimer. Mg(2+) is required as a cofactor.

It carries out the reaction XTP + H2O = XMP + diphosphate + H(+). The catalysed reaction is dITP + H2O = dIMP + diphosphate + H(+). It catalyses the reaction ITP + H2O = IMP + diphosphate + H(+). In terms of biological role, pyrophosphatase that catalyzes the hydrolysis of nucleoside triphosphates to their monophosphate derivatives, with a high preference for the non-canonical purine nucleotides XTP (xanthosine triphosphate), dITP (deoxyinosine triphosphate) and ITP. Seems to function as a house-cleaning enzyme that removes non-canonical purine nucleotides from the nucleotide pool, thus preventing their incorporation into DNA/RNA and avoiding chromosomal lesions. The chain is dITP/XTP pyrophosphatase from Corynebacterium glutamicum (strain ATCC 13032 / DSM 20300 / JCM 1318 / BCRC 11384 / CCUG 27702 / LMG 3730 / NBRC 12168 / NCIMB 10025 / NRRL B-2784 / 534).